We begin with the raw amino-acid sequence, 66 residues long: uncharacterized protein (66 aa).

An N-terminal signal peptide occupies residues M1 to G19.

This is an uncharacterized protein from Saccharomyces cerevisiae (strain ATCC 204508 / S288c) (Baker's yeast).